A 106-amino-acid chain; its full sequence is MSQEIAVIGSPDFTTGFRLAGVRKFENVPDEAKDDELDEAVTRTLEDEDVGIIVMHEDDLDHLSRNARQSVERSIEPTLVTLGGSGGASGLRDQIKRAIGIDLMDE.

This sequence belongs to the V-ATPase F subunit family. As to quaternary structure, has multiple subunits with at least A(3), B(3), C, D, E, F, H, I and proteolipid K(x).

The protein localises to the cell membrane. Component of the A-type ATP synthase that produces ATP from ADP in the presence of a proton gradient across the membrane. This is A-type ATP synthase subunit F from Haloferax volcanii (strain ATCC 29605 / DSM 3757 / JCM 8879 / NBRC 14742 / NCIMB 2012 / VKM B-1768 / DS2) (Halobacterium volcanii).